The following is a 276-amino-acid chain: Omega-amidase NIT2-B (276 aa).

The CN hydrolase domain maps to F4–L248. E43 functions as the Proton acceptor in the catalytic mechanism. Residue K112 is the Proton donor of the active site. The active-site Nucleophile is the C153.

The protein belongs to the carbon-nitrogen hydrolase superfamily. NIT1/NIT2 family. As to quaternary structure, homodimer.

The protein localises to the cytoplasm. It carries out the reaction 2-oxoglutaramate + H2O = 2-oxoglutarate + NH4(+). The catalysed reaction is 2-oxosuccinamate + H2O = oxaloacetate + NH4(+). Has omega-amidase activity. The role of omega-amidase is to remove potentially toxic intermediates by converting 2-oxoglutaramate and 2-oxosuccinamate to biologically useful 2-oxoglutarate and oxaloacetate, respectively. The protein is Omega-amidase NIT2-B (nit2b) of Xenopus laevis (African clawed frog).